The primary structure comprises 165 residues: MAGRLDEDLKDVTLLGNQNTKYLFEYSPEILEVFDNNHPNRDYFVKFNCPEFTSLCPKTGQPDFATIYISYIPEQRMVESKSLKLYLFSFRNHGDFHEDCMNVIMNDLIKLMDPRYIEVWGKFTPRGGISIDPYCNYGRPGTKYEKMADYRMMNHDLYPEKIDNR.

Cys56 acts as the Thioimide intermediate in catalysis. The active-site Proton donor is the Asp63. Substrate is bound by residues 78 to 80 (VES) and 97 to 98 (HE).

It belongs to the GTP cyclohydrolase I family. QueF type 1 subfamily.

The protein resides in the cytoplasm. The catalysed reaction is 7-aminomethyl-7-carbaguanine + 2 NADP(+) = 7-cyano-7-deazaguanine + 2 NADPH + 3 H(+). Its pathway is tRNA modification; tRNA-queuosine biosynthesis. Catalyzes the NADPH-dependent reduction of 7-cyano-7-deazaguanine (preQ0) to 7-aminomethyl-7-deazaguanine (preQ1). This chain is NADPH-dependent 7-cyano-7-deazaguanine reductase, found in Bacillus mycoides (strain KBAB4) (Bacillus weihenstephanensis).